A 495-amino-acid polypeptide reads, in one-letter code: UDP-N-acetylmuramoyl-L-alanyl-D-glutamate--2,6-diaminopimelate ligase (495 aa).

UDP-N-acetyl-alpha-D-muramoyl-L-alanyl-D-glutamate-binding positions include leucine 27, serine 29, and 44–46; that span reads HQA. 116-122 contributes to the ATP binding site; that stretch reads GTNGKTT. UDP-N-acetyl-alpha-D-muramoyl-L-alanyl-D-glutamate-binding positions include asparagine 157, 158–159, serine 185, glutamine 191, and arginine 193; that span reads TT. At lysine 225 the chain carries N6-carboxylysine. Meso-2,6-diaminopimelate is bound by residues arginine 390, 414-417, glycine 465, and glutamate 469; that span reads DNPR. The Meso-diaminopimelate recognition motif signature appears at 414-417; sequence DNPR.

Belongs to the MurCDEF family. MurE subfamily. It depends on Mg(2+) as a cofactor. Post-translationally, carboxylation is probably crucial for Mg(2+) binding and, consequently, for the gamma-phosphate positioning of ATP.

It is found in the cytoplasm. It catalyses the reaction UDP-N-acetyl-alpha-D-muramoyl-L-alanyl-D-glutamate + meso-2,6-diaminopimelate + ATP = UDP-N-acetyl-alpha-D-muramoyl-L-alanyl-gamma-D-glutamyl-meso-2,6-diaminopimelate + ADP + phosphate + H(+). The protein operates within cell wall biogenesis; peptidoglycan biosynthesis. Its function is as follows. Catalyzes the addition of meso-diaminopimelic acid to the nucleotide precursor UDP-N-acetylmuramoyl-L-alanyl-D-glutamate (UMAG) in the biosynthesis of bacterial cell-wall peptidoglycan. The sequence is that of UDP-N-acetylmuramoyl-L-alanyl-D-glutamate--2,6-diaminopimelate ligase from Enterobacter sp. (strain 638).